Here is a 1278-residue protein sequence, read N- to C-terminus: MRLLLLVPLLLAPAPGSSAPKVRRQSDTWGPWSQWSPCSRTCGGGVSFRERPCYSQRRDGGSSCVGPARSHRSCRTESCPDGARDFRAEQCAEFDGAEFQGRRYRWLPYYSAPNKCELNCIPKGENFYYKHREAVVDGTPCEPGKRDVCVDGSCRVVGCDHELDSSKQEDKCLRCGGDGTTCYPVAGTFDANDLSRGYNQILIVPMGATSILIDEAAASRNFLAVKNVRGEYYLNGHWTIEAARALPAASTILHYERGAEGDLAPERLHARGPTSEPLVIELISQEPNPGVHYEYHLPLRRPSPGFSWSHGSWSDCSAECGGGHQSRLVFCTIDHEAYPDHMCQRQPRPADRRSCNLHPCPETKRWKAGPWAPCSASCGGGSQSRSVYCISSDGAGIQEAVEEAECAGLPGKPPAIQACNLQRCAAWSPEPWGECSVSCGVGVRKRSVTCRGERGSLLHTAACSLEDRPPLTEPCVHEDCPLLSDQAWHVGTWGLCSKSCSSGTRRRQVICAIGPPSHCGSLQHSKPVDVEPCNTQPCHLPQEVPSMQDVHTPASNPWMPLGPQESPASDSRGQWWAAQEHPSARGDHRGERGDPRGDQGTHLSALGPAPSLQQPPYQQPLRSGSGPHDCRHSPHGCCPDGHTASLGPQWQGCPGAPCQQSRYGCCPDRVSVAEGPHHAGCTKSYGGDSTGGMPRSRAVASTVHNTHQPQAQQNEPSECRGSQFGCCYDNVATAAGPLGEGCVGQPSHAYPVRCLLPSAHGSCADWAARWYFVASVGQCNRFWYGGCHGNANNFASEQECMSSCQGSLHGPRRPQPGASGRSTHTDGGGSSPAGEQEPSQHRTGAAVQRKPWPSGGLWRQDQQPGPGEAPHTQAFGEWPWGQELGSRAPGLGGDAGSPAPPFHSSSYRISLAGVEPSLVQAALGQLVRLSCSDDTAPESQAAWQKDGQPISSDRHRLQFDGSLIIHPLQAEDAGTYSCGSTRPGRDSQKIQLRIIGGDMAVLSEAELSRFPQPRDPAQDFGQAGAAGPLGAIPSSHPQPANRLRLDQNQPRVVDASPGQRIRMTCRAEGFPPPAIEWQRDGQPVSSPRHQLQPDGSLVISRVAVEDGGFYTCVAFNGQDRDQRWVQLRVLGELTISGLPPTVTVPEGDTARLLCVVAGESVNIRWSRNGLPVQADGHRVHQSPDGTLLIYNLRARDEGSYTCSAYQGSQAVSRSTEVKVVSPAPTAQPRDPGRDCVDQPELANCDLILQAQLCGNEYYSSFCCASCSRFQPHAQPIWQ.

The first 18 residues, 1–18, serve as a signal peptide directing secretion; sequence MRLLLLVPLLLAPAPGSS. TSP type-1 domains lie at 26-80, 304-361, 362-421, 423-481, and 484-539; these read SDTW…ESCP, PGFS…HPCP, ETKR…ACNL, RCAA…EDCP, and SDQA…QPCH. 6 disulfides stabilise this stretch: Cys-38–Cys-74, Cys-42–Cys-79, Cys-53–Cys-64, Cys-316–Cys-355, Cys-320–Cys-360, and Cys-331–Cys-343. A disordered region spans residues 544 to 632; the sequence is VPSMQDVHTP…SGSGPHDCRH (89 aa). The span at 582-599 shows a compositional bias: basic and acidic residues; sequence PSARGDHRGERGDPRGDQ. The span at 608–620 shows a compositional bias: low complexity; sequence PAPSLQQPPYQQP. 3 cysteine pairs are disulfide-bonded: Cys-754–Cys-804, Cys-763–Cys-787, and Cys-779–Cys-800. In terms of domain architecture, BPTI/Kunitz inhibitor spans 754–804; sequence CLLPSAHGSCADWAARWYFVASVGQCNRFWYGGCHGNANNFASEQECMSSC. The tract at residues 805–901 is disordered; sequence QGSLHGPRRP…GGDAGSPAPP (97 aa). Ig-like C2-type domains follow at residues 900–995, 1033–1128, and 1133–1218; these read PPFH…LRII, PSSH…VQLR, and LTIS…TEVK. Cysteines 931 and 978 form a disulfide. The interval 1014-1042 is disordered; the sequence is RDPAQDFGQAGAAGPLGAIPSSHPQPANR. 2 cysteine pairs are disulfide-bonded: Cys-1065-Cys-1112 and Cys-1154-Cys-1202. One can recognise a PLAC domain in the interval 1231–1270; it reads PGRDCVDQPELANCDLILQAQLCGNEYYSSFCCASCSRFQ.

It belongs to the papilin family.

It is found in the secreted. The chain is Papilin (PAPLN) from Homo sapiens (Human).